A 479-amino-acid chain; its full sequence is Ribosomal RNA small subunit methyltransferase F (479 aa).

Residues 125–131 (AAAPGSK), Glu-149, Asp-176, and Asp-194 contribute to the S-adenosyl-L-methionine site. The Nucleophile role is filled by Cys-247.

The protein belongs to the class I-like SAM-binding methyltransferase superfamily. RsmB/NOP family.

The protein resides in the cytoplasm. It catalyses the reaction cytidine(1407) in 16S rRNA + S-adenosyl-L-methionine = 5-methylcytidine(1407) in 16S rRNA + S-adenosyl-L-homocysteine + H(+). Functionally, specifically methylates the cytosine at position 1407 (m5C1407) of 16S rRNA. The protein is Ribosomal RNA small subunit methyltransferase F of Escherichia coli (strain SE11).